The following is a 416-amino-acid chain: Phosphatidylinositol 5-phosphate 4-kinase type-2 beta (416 aa).

Ser2 is modified (N-acetylserine). Thr8 is subject to Phosphothreonine. The residue at position 19 (Ser19) is a Phosphoserine. The 378-residue stretch at 38–415 folds into the PIPK domain; sequence ASEPILSVLM…RFNEFMSNIL (378 aa). The segment at 64–70 is required for interaction with PIP5K1A; that stretch reads VMLMPDD. 2 positions are modified to N6-acetyllysine: Lys94 and Lys150. ATP is bound by residues 202-204 and Lys214; that span reads RNV. GTP contacts are provided by residues 203–204 and Lys214; that span reads NV. Thr322 carries the phosphothreonine modification. A Phosphoserine modification is found at Ser326. Asp369 lines the GTP pocket.

Homodimer. Binds TNFRSF1A. Interacts with PIP4K2A; the interaction suppresses ubiquitination by the SPOP/CUL3 complex. Probably interacts with PIP5K1A; the interaction inhibits PIP5K1A kinase activity. In terms of processing, ubiquitinated by the SPOP/CUL3 complex. Ubiquitination is stimulated by PtdIns5P levels. Post-translationally, phosphorylated on serine residues.

It localises to the endoplasmic reticulum membrane. The protein localises to the cell membrane. Its subcellular location is the nucleus. It is found in the cytoplasm. It carries out the reaction a 1,2-diacyl-sn-glycero-3-phospho-(1D-myo-inositol-5-phosphate) + ATP = a 1,2-diacyl-sn-glycero-3-phospho-(1D-myo-inositol-4,5-bisphosphate) + ADP + H(+). It catalyses the reaction 1,2-dihexadecanoyl-sn-glycero-3-phospho-(1D-myo-inositol-5-phosphate) + ATP = 1,2-dihexadecanoyl-sn-glycero-3-phospho-(1D-myo-inositol-4,5-bisphosphate) + ADP + H(+). The enzyme catalyses 1,2-dihexadecanoyl-sn-glycero-3-phospho-(1D-myo-inositol-5-phosphate) + GTP = 1,2-dihexadecanoyl-sn-glycero-3-phospho-(1D-myo-inositol-4,5-bisphosphate) + GDP + H(+). In terms of biological role, participates in the biosynthesis of phosphatidylinositol 4,5-bisphosphate. Preferentially utilizes GTP, rather than ATP, for PI(5)P phosphorylation and its activity reflects changes in direct proportion to the physiological GTP concentration. Its GTP-sensing activity is critical for metabolic adaptation. PIP4Ks negatively regulate insulin signaling through a catalytic-independent mechanism. They interact with PIP5Ks and suppress PIP5K-mediated PtdIns(4,5)P2 synthesis and insulin-dependent conversion to PtdIns(3,4,5)P3. The polypeptide is Phosphatidylinositol 5-phosphate 4-kinase type-2 beta (Rattus norvegicus (Rat)).